The following is a 232-amino-acid chain: MSAAIWVVVPAAGRGTRFGAPLPKQYLQAGGQILLAHTLDALLAHPAVAGAMVVIGQDDADWPGWNEWAGKPVLTCIGGATRAASVLAGLQALPETVRADEFVLVHDAARPNLSPADLGRLLEVGRTDPVGAILAAPVRDTLKRAGDDGGIDGTEPRERLWRALTPQLFRRHQLSRALSDAAAAGVEVTDEAMAMERQGQRPLLVEGSEDNFKVTTPADLDRFEFVLSRRAG.

The protein belongs to the IspD/TarI cytidylyltransferase family. IspD subfamily.

It catalyses the reaction 2-C-methyl-D-erythritol 4-phosphate + CTP + H(+) = 4-CDP-2-C-methyl-D-erythritol + diphosphate. The protein operates within isoprenoid biosynthesis; isopentenyl diphosphate biosynthesis via DXP pathway; isopentenyl diphosphate from 1-deoxy-D-xylulose 5-phosphate: step 2/6. Catalyzes the formation of 4-diphosphocytidyl-2-C-methyl-D-erythritol from CTP and 2-C-methyl-D-erythritol 4-phosphate (MEP). This Stenotrophomonas maltophilia (strain K279a) protein is 2-C-methyl-D-erythritol 4-phosphate cytidylyltransferase.